We begin with the raw amino-acid sequence, 292 residues long: Protein rogdi homolog (292 aa).

Residues M1–Y12 are compositionally biased toward polar residues. A disordered region spans residues M1–R25.

Belongs to the rogdi family.

It is found in the nucleus envelope. The chain is Protein rogdi homolog from Caenorhabditis elegans.